A 485-amino-acid polypeptide reads, in one-letter code: Glutamate--tRNA ligase 1 (485 aa).

The 'HIGH' region motif lies at 9-19 (PSPTGHLHIGG). The short motif at 250–254 (KMSKR) is the 'KMSKS' region element. Lys253 serves as a coordination point for ATP.

Belongs to the class-I aminoacyl-tRNA synthetase family. Glutamate--tRNA ligase type 1 subfamily. Monomer.

It is found in the cytoplasm. It carries out the reaction tRNA(Glu) + L-glutamate + ATP = L-glutamyl-tRNA(Glu) + AMP + diphosphate. In terms of biological role, catalyzes the attachment of glutamate to tRNA(Glu) in a two-step reaction: glutamate is first activated by ATP to form Glu-AMP and then transferred to the acceptor end of tRNA(Glu). The chain is Glutamate--tRNA ligase 1 from Caldicellulosiruptor saccharolyticus (strain ATCC 43494 / DSM 8903 / Tp8T 6331).